A 630-amino-acid chain; its full sequence is Plastin-1 (630 aa).

The residue at position 1 (methionine 1) is an N-acetylmethionine. EF-hand domains lie at 11 to 46 (EELE…ASLP) and 51 to 86 (KVRE…LKSK). Residues aspartate 24, aspartate 26, serine 28, tyrosine 30, glutamate 35, aspartate 64, asparagine 66, aspartate 68, lysine 70, and glutamate 75 each contribute to the Ca(2+) site. Actin-binding regions lie at residues 108 to 381 (TSSI…CLHK) and 382 to 626 (PDNN…GKGL). Calponin-homology (CH) domains follow at residues 122-238 (EEEK…KVGL), 266-377 (LSPE…NTYP), 396-505 (SKEE…RRYT), and 517-626 (KVTD…GKGL).

Monomer. In terms of processing, phosphorylated. As to expression, in the inner ear, it is expressed in the organ of Corti. Abundant in the utricle (at protein level).

Its subcellular location is the cytoplasm. The protein resides in the cell projection. It localises to the stereocilium. In terms of biological role, actin-bundling protein. In the inner ear, it is required for stereocilia formation. Mediates liquid packing of actin filaments that is necessary for stereocilia to grow to their proper dimensions. This is Plastin-1 (Pls1) from Mus musculus (Mouse).